We begin with the raw amino-acid sequence, 243 residues long: Protein Thf1 (243 aa).

The stretch at 180-224 forms a coiled coil; the sequence is SKARVEKDLNLYKSNLEKMAQAVELTEQILESERRKREQNESAKL. Residues 210–220 show a composition bias toward basic and acidic residues; that stretch reads ESERRKREQNE. Residues 210-243 are disordered; it reads ESERRKREQNESAKLNTGSSEQMSQGVEACSNIS. Residues 221 to 243 show a composition bias toward polar residues; the sequence is SAKLNTGSSEQMSQGVEACSNIS.

Belongs to the THF1 family.

May be involved in photosynthetic membrane biogenesis. The polypeptide is Protein Thf1 (Prochlorococcus marinus (strain MIT 9313)).